The primary structure comprises 457 residues: Putative ankyrin repeat protein L112 (457 aa).

ANK repeat units follow at residues 62 to 91, 104 to 132, 133 to 162, 193 to 219, 220 to 249, 251 to 279, 281 to 309, 310 to 339, 341 to 368, 400 to 429, and 431 to 457; these read QRIT…NHNP, SKDT…ASIN, SSSL…EIIN, YINE…LDCS, ITVD…DPRK, KCWA…KPKE, NVDA…DTIT, RRDW…SQKS, NKAL…DFRQ, NNNE…DYNP, and KDQL…DTLK.

This chain is Putative ankyrin repeat protein L112, found in Acanthamoeba polyphaga mimivirus (APMV).